We begin with the raw amino-acid sequence, 294 residues long: MKRQRPQDSMISVPLQNENSTTTPTKEVSHLNFPLKRPRLHSFVPTSKQAALSDITPDTPPAFKTPYSSLPYNLVPQNSSTSKKRPRAEDLLVIEPSQNSLVPSTQNNEWNEIARKRVSLESDHPDKSGQVIDLATGQILDKQTEDIDDDRNKSAVSKSLVRHPHRLKMLPFGIQSAHPYISSLNSNYPTTWHFASHYYPTDSKQLVKYHPTEVHPSWTVEEPVHYNTYDGVVNEPNSSVIIEELDDDYDELNDPMNNNDTPITNSTHSAQMSNLPTHDSMDIDMGGAVPSTST.

Disordered regions lie at residues 1–30 (MKRQRPQDSMISVPLQNENSTTTPTKEVSH), 51–86 (ALSDITPDTPPAFKTPYSSLPYNLVPQNSSTSKKRP), and 250–294 (DELN…STST). Composition is skewed to polar residues over residues 7-26 (QDSMISVPLQNENSTTTPTK), 66-81 (PYSSLPYNLVPQNSST), and 255-277 (PMNNNDTPITNSTHSAQMSNLPT).

It localises to the nucleus. This is an uncharacterized protein from Schizosaccharomyces pombe (strain 972 / ATCC 24843) (Fission yeast).